The chain runs to 321 residues: NADH-ubiquinone oxidoreductase chain 1 (321 aa).

The next 8 helical transmembrane spans lie at 7 to 27, 73 to 93, 104 to 124, 148 to 168, 175 to 195, 227 to 247, 256 to 276, and 297 to 317; these read ITNS…LTLM, ILLI…WTPI, LGLL…LWAG, VTLG…TMQL, HTWL…STLA, FFLA…ILFI, ELFL…FLWI, and LPLT…ISGI.

Belongs to the complex I subunit 1 family.

It is found in the mitochondrion inner membrane. It carries out the reaction a ubiquinone + NADH + 5 H(+)(in) = a ubiquinol + NAD(+) + 4 H(+)(out). Functionally, core subunit of the mitochondrial membrane respiratory chain NADH dehydrogenase (Complex I) that is believed to belong to the minimal assembly required for catalysis. Complex I functions in the transfer of electrons from NADH to the respiratory chain. The immediate electron acceptor for the enzyme is believed to be ubiquinone. The protein is NADH-ubiquinone oxidoreductase chain 1 (MT-ND1) of Varanus dumerilii (Dumeril's monitor).